The primary structure comprises 556 residues: MSPLPIFHRLPHATFSSFLLSLSQAGSSKTSVAFLNAFKSEDIIARIGLWWQLIRAVVVVPVFKFLVLLCLVMSVMFFVEVMYMGIVVLYVKLFKRKPEKFYKWEAMEDDVECGSASYPMVLVQIPMYNEKEVCEQSIAAACKISWPSNRIIIQVLDDSTDPASKELVKKECDRWSKEGVNITFEIRDNRNGYKAGALREGMRHSYVKQCDYVAIFDADFQPDPDFLHRTVPFLIHNPKLALVQGRWEFVNAGQCMMTRLQEMSLSYHFTIEQQVGSSTFAFFGFNGTAGVWRISALNESGGWNDQTTVEDMDLAVRATLRGWKFLYIDDLKVKSELPCSFKALRSQQHRWTCGPANLLRKMAGQIIRSENVSLWKKWYMLYSFFFMRKIVAHILTFCFYCVILPATVLFPEVTVPKWAAFYLPSLITLLIAIGRLRSIHLLAFWVLFENAMSLLRAKALVMGLFETGRVQEWVVTEKLGDTLKTKLIPQVPNVRFRERVHLLELLVGAYLLFCGIYDIVYGKNTLYVYLLFQSVAFFVVGFGFVGKYVPASSYLA.

Residues Val-58–Phe-78 traverse the membrane as a helical segment. Asp-158 is a catalytic residue. Substrate is bound by residues Asp-217 and Asp-219. Asp-311 is a catalytic residue. Helical transmembrane passes span Ile-390–Phe-410, Leu-426–Phe-448, Leu-502–Gly-522, and Leu-526–Gly-546.

This sequence belongs to the glycosyltransferase 2 family. Plant cellulose synthase-like A subfamily. In terms of tissue distribution, ubiquitous.

It is found in the golgi apparatus membrane. The enzyme catalyses GDP-mannose + (glucomannan)n = GDP + (glucomannan)n+1.. Functionally, probable mannan synthase which consists of a 4-beta-mannosyltransferase activity on mannan using GDP-mannose. The beta-1,4-mannan product is the backbone for galactomannan synthesis by galactomannan galactosyltransferase. Galactomannan is a noncellulosic polysaccharides of plant cell wall. Required for synthesis of a cell wall polysaccharide essential for pollen tube growth, for cell wall structure, or for signaling during plant embryo development. In Arabidopsis thaliana (Mouse-ear cress), this protein is Glucomannan 4-beta-mannosyltransferase 7.